Here is a 289-residue protein sequence, read N- to C-terminus: tRNA pseudouridine synthase B (289 aa).

Residue aspartate 38 is the Nucleophile of the active site.

This sequence belongs to the pseudouridine synthase TruB family. Type 1 subfamily.

The catalysed reaction is uridine(55) in tRNA = pseudouridine(55) in tRNA. Functionally, responsible for synthesis of pseudouridine from uracil-55 in the psi GC loop of transfer RNAs. This chain is tRNA pseudouridine synthase B, found in Clostridium novyi (strain NT).